A 247-amino-acid polypeptide reads, in one-letter code: Carboxy-S-adenosyl-L-methionine synthase (247 aa).

S-adenosyl-L-methionine is bound by residues Y39, G64–S66, D89–N90, D117–I118, N132, and R199.

This sequence belongs to the class I-like SAM-binding methyltransferase superfamily. Cx-SAM synthase family. Homodimer.

The catalysed reaction is prephenate + S-adenosyl-L-methionine = carboxy-S-adenosyl-L-methionine + 3-phenylpyruvate + H2O. Catalyzes the conversion of S-adenosyl-L-methionine (SAM) to carboxy-S-adenosyl-L-methionine (Cx-SAM). The protein is Carboxy-S-adenosyl-L-methionine synthase of Salmonella enteritidis PT4 (strain P125109).